Reading from the N-terminus, the 53-residue chain is MEDKHGIKDKVAGKLKEVEGKITGDKAREVEGKAQQAKGKVKSKATEVKEDLE.

Residues 27-53 (AREVEGKAQQAKGKVKSKATEVKEDLE) are disordered. The segment covering 44–53 (KATEVKEDLE) has biased composition (basic and acidic residues).

This sequence belongs to the UPF0337 (CsbD) family.

This chain is UPF0337 protein LJ_0034.1, found in Lactobacillus johnsonii (strain CNCM I-12250 / La1 / NCC 533).